A 737-amino-acid chain; its full sequence is Delta and Notch-like epidermal growth factor-related receptor (737 aa).

An N-terminal signal peptide occupies residues 1–25 (MPPRRAQAPGAPLLPVLALLPLLLG). Residues 26-640 (AGPQSGCLAS…LTNMPRHSLY (615 aa)) lie on the Extracellular side of the membrane. EGF-like domains follow at residues 44-92 (APGP…TYCQ) and 94-133 (VADP…LNCE). The tract at residues 44 to 133 (APGPCASQPC…NDGYEGLNCE (90 aa)) is interaction with NOTCH1. 6 disulfides stabilise this stretch: Cys-48–Cys-59, Cys-53–Cys-80, Cys-82–Cys-91, Cys-98–Cys-108, Cys-103–Cys-121, and Cys-123–Cys-132. Asn-204 carries an N-linked (GlcNAc...) asparagine glycan. 5 EGF-like domains span residues 309–348 (PGDS…TFCE), 349–390 (EFDA…ELCQ), 392–428 (KIDY…SACE), 430–466 (KVDP…PTCA), and 468–503 (LVDF…LYCE). Disulfide bonds link Cys-319-Cys-336, Cys-338-Cys-347, Cys-353-Cys-364, Cys-358-Cys-378, Cys-380-Cys-389, Cys-396-Cys-407, Cys-401-Cys-416, Cys-418-Cys-427, Cys-434-Cys-445, Cys-439-Cys-454, Cys-456-Cys-465, Cys-472-Cys-482, Cys-477-Cys-491, Cys-493-Cys-502, Cys-509-Cys-520, Cys-514-Cys-529, Cys-531-Cys-540, Cys-547-Cys-558, Cys-552-Cys-567, Cys-569-Cys-578, Cys-585-Cys-596, Cys-590-Cys-605, and Cys-607-Cys-616. The region spanning 505-541 (EYNECLSAPCLNAATCRDLINGYECVCLAEYKGTHCE) is the EGF-like 8; calcium-binding domain. Positions 543–579 (YKDPCANISCLNGGTCDSEGLNGTCICAPGFTGEECD) constitute an EGF-like 9 domain. An N-linked (GlcNAc...) asparagine glycan is attached at Asn-564. Residues 581–617 (DINECDSNPCHHAGTCLDQPNGYTCHCPHGWVGANCE) enclose the EGF-like 10; calcium-binding domain. Residues 641–661 (IIIGALCVAFILMLIILIVGI) form a helical membrane-spanning segment. The Cytoplasmic portion of the chain corresponds to 662 to 737 (CRISRIEYQG…LVTLIKTKDL (76 aa)). The segment at 677-680 (YEEF) is interaction with AP1G1 and somatodendritic targeting. Residue Ser-685 is modified to Phosphoserine. A Phosphotyrosine modification is found at Tyr-711. The residue at position 714 (Thr-714) is a Phosphothreonine. The residue at position 721 (Tyr-721) is a Phosphotyrosine. At Ser-722 the chain carries Phosphoserine.

Interacts with AP1G1. Interacts with NOTCH1. N-glycosylated. In terms of tissue distribution, specifically expressed in brain neurons (at protein level).

The protein localises to the cell membrane. In terms of biological role, mediates neuron-glia interaction during astrocytogenesis. May promote differentiation of Bergmann glia during cerebellar development by activating DELTEX-dependent NOTCH1 signaling. In Mus musculus (Mouse), this protein is Delta and Notch-like epidermal growth factor-related receptor (Dner).